The following is a 133-amino-acid chain: Ribosome-binding factor A (133 aa).

This sequence belongs to the RbfA family. As to quaternary structure, monomer. Binds 30S ribosomal subunits, but not 50S ribosomal subunits or 70S ribosomes.

The protein resides in the cytoplasm. One of several proteins that assist in the late maturation steps of the functional core of the 30S ribosomal subunit. Associates with free 30S ribosomal subunits (but not with 30S subunits that are part of 70S ribosomes or polysomes). Required for efficient processing of 16S rRNA. May interact with the 5'-terminal helix region of 16S rRNA. The polypeptide is Ribosome-binding factor A (Escherichia coli O127:H6 (strain E2348/69 / EPEC)).